A 39-amino-acid chain; its full sequence is Photosystem II reaction center protein L (39 aa).

A helical membrane pass occupies residues 18 to 38; it reads SLYLGVLSVLVLGILFSSYFF.

It belongs to the PsbL family. PSII is composed of 1 copy each of membrane proteins PsbA, PsbB, PsbC, PsbD, PsbE, PsbF, PsbH, PsbI, PsbJ, PsbK, PsbL, PsbM, PsbT, PsbX, PsbY, Psb30/Ycf12, peripheral proteins PsbO, CyanoQ (PsbQ), PsbU, PsbV and a large number of cofactors. It forms dimeric complexes.

The protein resides in the cellular thylakoid membrane. Functionally, one of the components of the core complex of photosystem II (PSII). PSII is a light-driven water:plastoquinone oxidoreductase that uses light energy to abstract electrons from H(2)O, generating O(2) and a proton gradient subsequently used for ATP formation. It consists of a core antenna complex that captures photons, and an electron transfer chain that converts photonic excitation into a charge separation. This subunit is found at the monomer-monomer interface and is required for correct PSII assembly and/or dimerization. This chain is Photosystem II reaction center protein L, found in Prochlorococcus marinus (strain MIT 9515).